The primary structure comprises 84 residues: MDDKFTTLPCELEDYPGSITCPHCSAQITTAVDHVVGKMSWVVCTAITLACLPCCCIPFLCNSTKDVRHTCPKCKQAVFVYKIL.

The 83-residue stretch at 1-83 (MDDKFTTLPC…CKQAVFVYKI (83 aa)) folds into the LITAF domain. Residues Cys21 and Cys24 each contribute to the Zn(2+) site. Positions 39–61 (MSWVVCTAITLACLPCCCIPFLC) are membrane-binding amphipathic helix. The Zn(2+) site is built by Cys71 and Cys74.

The protein resides in the host membrane. This is an uncharacterized protein from Dryophytes versicolor (chameleon treefrog).